The primary structure comprises 234 residues: Multicopy suppressor of SEC21 protein 27 (234 aa).

Over 1-47 (MQTPLESTDVKLDTLNEPSAHLIEKNVALPKDIFRSYLSYWIYEIAR) the chain is Cytoplasmic. Position 3 is a phosphothreonine (Thr3). Residues 48–68 (YTPVMILSLVIGVLVLLIIFF) traverse the membrane as a helical segment. The Extracellular portion of the chain corresponds to 69 to 72 (NDNE). The chain crosses the membrane as a helical span at residues 73–93 (ACVFNSAYYAYLSLVVLLIIL). The Cytoplasmic portion of the chain corresponds to 94–234 (GDGNPKLVSR…NIDALLKKTE (141 aa)). Residues 231 to 234 (KKTE) form a COPI binding region.

This sequence belongs to the DUP/COS family. As to quaternary structure, interacts with MST28. Binds to coatomer proteins of COPI and SEC23/SEC24 of COPII coated vesicles.

It localises to the endoplasmic reticulum. The protein resides in the golgi apparatus. It is found in the cytoplasmic vesicle. The protein localises to the COPI-coated vesicle membrane. Its subcellular location is the COPII-coated vesicle membrane. Functionally, involved in protein trafficking vesicle formation, probably by stabilizing of coatomer at the Golgi membrane and thus allowing the efficient formation of COPI coated vesicles. This Saccharomyces cerevisiae (strain ATCC 204508 / S288c) (Baker's yeast) protein is Multicopy suppressor of SEC21 protein 27 (MST27).